The following is a 206-amino-acid chain: MGGKWSKSSVIGWPAVRERMRRAEPAADGVGAASRDLEKHGAITSSNTAANNAACAWLEAQEEEKVGFPVTPQVPLRPMTYKAAVDLSHFLKEKGGLEGLIHSQRRQDILDLWIYHTQGYFPDWQNYTPGPGIRYPLTFGWCYKLVPVEPDKVEEANKGENTSLLHPVSLHGMDDPEREVLEWRFDSRLAFHHVARELHPEYFKNC.

Residue G2 is the site of N-myristoyl glycine; by host attachment. The residue at position 6 (S6) is a Phosphoserine; by host. The tract at residues E62 to K65 is acidic; interacts with host PACS1 and PACS2; stabilizes the interaction of NEF/MHC-I with host AP1M1; necessary for MHC-I internalization. Positions P69–P78 are SH3-binding; interaction with Src family tyrosine kinases. Positions P72 to P75 match the PxxP; stabilizes the interaction of NEF/MHC-I with host AP1M1; necessary for MHC-I internalization motif. A mediates dimerization, Nef-PTE1 interaction region spans residues D108–W124. The interval V148–V180 is binding to ATP6V1H. Residues L164 to L165 carry the Dileucine internalization motif; necessary for CD4 internalization motif. A Diacidic; necessary for CD4 internalization motif is present at residues D174–D175.

Belongs to the lentivirus primate group Nef protein family. Monomer; cytosolic form. Homodimer; membrane bound form. Interacts with Nef associated p21-activated kinase (PAK2); this interaction activates PAK2. Associates with the Nef-MHC-I-AP1 complex; this complex is required for MHC-I internalization. Interacts (via C-terminus) with host PI3-kinase. Interacts with host PACS1; this interaction seems to be weak. Interacts with host PACS2. Interacts with host LCK and MAPK3; these interactions inhibit the kinase activity of the latter. Interacts with host ATP6V1H; this interaction may play a role in CD4 endocytosis. Associates with the CD4-Nef-AP2 complex; this complex is required for CD4 internalization. Interacts with host AP2 subunit alpha and AP2 subunit sigma2. Interacts with TCR-zeta chain; this interaction up-regulates the Fas ligand (FasL) surface expression. Interacts with host HCK, LYN, and SRC; these interactions activate the Src family kinases. Interacts with MAP3K5; this interaction inhibits the Fas and TNFR-mediated death signals. Interacts with beta-COP and PTE1. Interacts with human RACK1; this increases Nef phosphorylation by PKC. Interacts with TP53; this interaction decreases the half-life of TP53, protecting the infected cell against p53-mediated apoptosis. Post-translationally, the virion-associated Nef proteins are cleaved by the viral protease to release the soluble C-terminal core protein. Nef is probably cleaved concomitantly with viral structural proteins on maturation of virus particles. Myristoylated. In terms of processing, phosphorylated on serine residues, probably by host PKCdelta and theta.

It is found in the host cell membrane. The protein resides in the virion. The protein localises to the secreted. It localises to the host Golgi apparatus membrane. Functionally, factor of infectivity and pathogenicity, required for optimal virus replication. Alters numerous pathways of T-lymphocyte function and down-regulates immunity surface molecules in order to evade host defense and increase viral infectivity. Alters the functionality of other immunity cells, like dendritic cells, monocytes/macrophages and NK cells. In infected CD4(+) T-lymphocytes, down-regulates the surface MHC-I, mature MHC-II, CD4, CD28, CCR5 and CXCR4 molecules. Mediates internalization and degradation of host CD4 through the interaction of with the cytoplasmic tail of CD4, the recruitment of AP-2 (clathrin adapter protein complex 2), internalization through clathrin coated pits, and subsequent transport to endosomes and lysosomes for degradation. Diverts host MHC-I molecules to the trans-Golgi network-associated endosomal compartments by an endocytic pathway to finally target them for degradation. MHC-I down-regulation may involve AP-1 (clathrin adapter protein complex 1) or possibly Src family kinase-ZAP70/Syk-PI3K cascade recruited by PACS2. In consequence infected cells are masked for immune recognition by cytotoxic T-lymphocytes. Decreasing the number of immune receptors also prevents reinfection by more HIV particles (superinfection). Down-regulates host SERINC3 and SERINC5 thereby excluding these proteins from the viral particles. Virion infectivity is drastically higher when SERINC3 or SERINC5 are excluded from the viral envelope, because these host antiviral proteins impair the membrane fusion event necessary for subsequent virion penetration. Its function is as follows. Bypasses host T-cell signaling by inducing a transcriptional program nearly identical to that of anti-CD3 cell activation. Interaction with TCR-zeta chain up-regulates the Fas ligand (FasL). Increasing surface FasL molecules and decreasing surface MHC-I molecules on infected CD4(+) cells send attacking cytotoxic CD8+ T-lymphocytes into apoptosis. In terms of biological role, plays a role in optimizing the host cell environment for viral replication without causing cell death by apoptosis. Protects the infected cells from apoptosis in order to keep them alive until the next virus generation is ready to strike. Inhibits the Fas and TNFR-mediated death signals by blocking MAP3K5/ASK1. Decreases the half-life of TP53, protecting the infected cell against p53-mediated apoptosis. Inhibits the apoptotic signals regulated by the Bcl-2 family proteins through the formation of a Nef/PI3-kinase/PAK2 complex that leads to activation of PAK2 and induces phosphorylation of host BAD. Functionally, extracellular Nef protein targets CD4(+) T-lymphocytes for apoptosis by interacting with CXCR4 surface receptors. In Homo sapiens (Human), this protein is Protein Nef.